We begin with the raw amino-acid sequence, 688 residues long: Lipase (688 aa).

An N-terminal signal peptide occupies residues 1–35 (MKTRQNKYSIRKFSVGASSILIAALLFMGGGSAQA). A disordered region spans residues 31–309 (GSAQAAEQQQ…KSAKQKQYKN (279 aa)). Positions 36 to 302 (AEQQQDKGTV…KNEDQTNKSA (267 aa)) are cleaved as a propeptide — removed in mature form. Polar residues predominate over residues 45 to 54 (VENSTTQSIG). 2 stretches are compositionally biased toward basic and acidic residues: residues 84 to 95 (ESLHNETPKNED) and 103 to 143 (SQND…KHAS). 2 stretches are compositionally biased toward polar residues: residues 144–175 (ENNQ…AQQE) and 184–211 (KQDT…QSTE). Residues 227–268 (KNDDDKVETFNLNSKEEPLKVDKQANPTTDKDKSSKNDKGSH) are compositionally biased toward basic and acidic residues. Residues 274 to 289 (LESNAVATTNKQSKQQ) show a composition bias toward polar residues. The Nucleophile role is filled by Ser418. Residue Asp609 is the Charge relay system of the active site. Residue Asp647 participates in Ca(2+) binding. The active-site Charge relay system is His648. 3 residues coordinate Ca(2+): Asp650, Asp655, and Asp658.

This sequence belongs to the AB hydrolase superfamily. Lipase family.

Its subcellular location is the secreted. It carries out the reaction a triacylglycerol + H2O = a diacylglycerol + a fatty acid + H(+). The sequence is that of Lipase (lip) from Staphylococcus epidermidis (strain ATCC 35984 / DSM 28319 / BCRC 17069 / CCUG 31568 / BM 3577 / RP62A).